A 324-amino-acid chain; its full sequence is Chorismate mutase 1, chloroplastic (324 aa).

The N-terminal 56 residues, 1–56, are a transit peptide targeting the chloroplast; it reads METQLLRFPSHTITSSITTNSSRNTTPFLPHKKWSHFVKFQLVNSSSSIKHGIRPL. Arginine 70 contributes to the L-phenylalanine binding site. The 255-residue stretch at 70-324 folds into the Chorismate mutase domain; sequence RVDETESYTL…QVQYLLRRLD (255 aa). L-tyrosine contacts are provided by residues arginine 141 and 202-205; that span reads NYGS. 202 to 205 lines the L-phenylalanine pocket; it reads NYGS.

Homodimer. Mostly expressed in petal tubes and petal limbs, and, to a lower extent, in stigmas, anthers, sepals, roots, stems and leaves.

The protein resides in the plastid. Its subcellular location is the chloroplast stroma. The catalysed reaction is chorismate = prephenate. Its pathway is metabolic intermediate biosynthesis; prephenate biosynthesis; prephenate from chorismate: step 1/1. With respect to regulation, allosterically activated by tryptophan but not by tyrosine and phenylalanine. Its function is as follows. Component of the floral volatile benzenoid/phenylpropanoid (FVBPs) biosynthetic pathway. Mediates the conversion of chorismate to prephenate, thus coupling metabolites from the shikimate pathway to the synthesis of FVBPs in the corolla. The chain is Chorismate mutase 1, chloroplastic from Petunia hybrida (Petunia).